A 462-amino-acid polypeptide reads, in one-letter code: Syringate O-demethylase (462 aa).

The protein belongs to the GcvT family.

It carries out the reaction syringate + (6S)-5,6,7,8-tetrahydrofolate = 3-O-methylgallate + (6S)-5-methyl-5,6,7,8-tetrahydrofolate. The protein operates within secondary metabolite metabolism; lignin degradation. In terms of biological role, involved in the catabolism of syringate. Catalyzes the conversion of syringate to 3-O-methylgallate (3MGA) in the presence of tetrahydrofolate. Has weak activity with vanillate and 3-O-methylgallate. This is Syringate O-demethylase from Sphingobium sp. (strain NBRC 103272 / SYK-6).